Reading from the N-terminus, the 362-residue chain is tRNA-specific 2-thiouridylase MnmA (362 aa).

ATP contacts are provided by residues 13-20 and M39; that span reads GLSGGVDS. The segment at 99–101 is interaction with target base in tRNA; it reads NPD. C104 serves as the catalytic Nucleophile. C104 and C200 form a disulfide bridge. G128 serves as a coordination point for ATP. The tract at residues 150 to 152 is interaction with tRNA; it reads KDQ. The Cysteine persulfide intermediate role is filled by C200. The interval 310–311 is interaction with tRNA; sequence RY.

Belongs to the MnmA/TRMU family.

It localises to the cytoplasm. The catalysed reaction is S-sulfanyl-L-cysteinyl-[protein] + uridine(34) in tRNA + AH2 + ATP = 2-thiouridine(34) in tRNA + L-cysteinyl-[protein] + A + AMP + diphosphate + H(+). In terms of biological role, catalyzes the 2-thiolation of uridine at the wobble position (U34) of tRNA, leading to the formation of s(2)U34. The polypeptide is tRNA-specific 2-thiouridylase MnmA (Vesicomyosocius okutanii subsp. Calyptogena okutanii (strain HA)).